The sequence spans 631 residues: Beta-galactosidase-1-like protein 3 (631 aa).

Glu-203 (proton donor) is an active-site residue. Glu-277 serves as the catalytic Nucleophile.

The protein belongs to the glycosyl hydrolase 35 family.

This is Beta-galactosidase-1-like protein 3 (Glb1l3) from Rattus norvegicus (Rat).